We begin with the raw amino-acid sequence, 501 residues long: MAASWRLHCNQPLLRYLLGFSSRRSLGLAQGAAAWPVDRGASWRWFHSTQLLQADPIKVLMPSLSPTMEQGNIVKWLRKEGEAVSAGDSLCEIETDKAVVTLDANDDGILAKIVVEEGAKNIQLGSLIALMVEEGEDWKQVEIPKDVSAPPPVSKPPAPTQPSPQPQIPCPARKEHKGTARFRLSPAARNILEKHSLDASQGTATGPRGIFTKEDALKLVELKQMGKITESRPASAPPPSLSASVPPQATAGPSYPRPMTPPVSIPGQPNAAGTFTEIPASNIRRVIAKRLTESKSTVPHAYATADCDLGAVLKVRRDLVKDDIKVSVNDFIIRAAAVTLKQMPGVNVTWDGEGPKQLPSVDISVAVATDKGLITPIIKDAAAKGIQEIADSVKVLSKKARDGKLMPEEYQGGSFSISNLGMFGIDEFAAVINPPQACILAVGRFRPVLKLTEDEEGNPQLQQHQLITVTMSSDSRVVDDELATRFLETFKANLENPMRLG.

A mitochondrion-targeting transit peptide spans 1–53 (MAASWRLHCNQPLLRYLLGFSSRRSLGLAQGAAAWPVDRGASWRWFHSTQLLQ). In terms of domain architecture, Lipoyl-binding spans 56–132 (PIKVLMPSLS…QLGSLIALMV (77 aa)). At lysine 97 the chain carries N6-lipoyllysine. The interval 145–176 (KDVSAPPPVSKPPAPTQPSPQPQIPCPARKEH) is disordered. Residues 149–169 (APPPVSKPPAPTQPSPQPQIP) show a composition bias toward pro residues. The 38-residue stretch at 183–220 (RLSPAARNILEKHSLDASQGTATGPRGIFTKEDALKLV) folds into the Peripheral subunit-binding (PSBD) domain. Residue lysine 194 is modified to N6-acetyllysine. Position 196 is a phosphoserine (serine 196). The disordered stretch occupies residues 228–256 (ITESRPASAPPPSLSASVPPQATAGPSYP). Lysine 394 carries the post-translational modification N6-succinyllysine.

The protein belongs to the 2-oxoacid dehydrogenase family. As to quaternary structure, part of the inner core of the multimeric pyruvate dehydrogenase complex that is composed of about 48 DLAT and 12 PDHX molecules. This core binds multiple copies of pyruvate dehydrogenase (subunits PDH1A and PDHB, E1), dihydrolipoamide acetyltransferase (DLAT, E2) and lipoamide dehydrogenase (DLD, E3). Interacts with SIRT4. Interacts with DLD. Delipoylated at Lys-97 by SIRT4, delipoylation decreases the PHD complex activity.

The protein resides in the mitochondrion matrix. In terms of biological role, required for anchoring dihydrolipoamide dehydrogenase (E3) to the dihydrolipoamide transacetylase (E2) core of the pyruvate dehydrogenase complexes of eukaryotes. This specific binding is essential for a functional PDH complex. This Mus musculus (Mouse) protein is Pyruvate dehydrogenase protein X component, mitochondrial (Pdhx).